We begin with the raw amino-acid sequence, 203 residues long: Chemotactic transduction protein ChpE (203 aa).

5 consecutive transmembrane segments (helical) span residues 3 to 23 (AIFL…GAVF), 46 to 66 (LIGD…LLGY), 69 to 89 (VRIP…VQGL), 123 to 143 (NVVY…GTPN), and 149 to 169 (VFFA…AALV).

This sequence belongs to the Rht family.

It localises to the cell membrane. The polypeptide is Chemotactic transduction protein ChpE (chpE) (Pseudomonas aeruginosa (strain ATCC 15692 / DSM 22644 / CIP 104116 / JCM 14847 / LMG 12228 / 1C / PRS 101 / PAO1)).